We begin with the raw amino-acid sequence, 177 residues long: Large ribosomal subunit protein uL6 (177 aa).

This sequence belongs to the universal ribosomal protein uL6 family. Part of the 50S ribosomal subunit.

Functionally, this protein binds to the 23S rRNA, and is important in its secondary structure. It is located near the subunit interface in the base of the L7/L12 stalk, and near the tRNA binding site of the peptidyltransferase center. The sequence is that of Large ribosomal subunit protein uL6 from Alteromonas mediterranea (strain DSM 17117 / CIP 110805 / LMG 28347 / Deep ecotype).